A 144-amino-acid polypeptide reads, in one-letter code: Large ribosomal subunit protein uL15 (144 aa).

The disordered stretch occupies residues Met1 to Gly52. A compositionally biased stretch (gly residues) spans Arg21–Gly31. Residues Gly32–Gly44 show a composition bias toward basic residues.

It belongs to the universal ribosomal protein uL15 family. In terms of assembly, part of the 50S ribosomal subunit.

Its function is as follows. Binds to the 23S rRNA. This Aliivibrio fischeri (strain ATCC 700601 / ES114) (Vibrio fischeri) protein is Large ribosomal subunit protein uL15.